Consider the following 105-residue polypeptide: Thioredoxin (105 aa).

The Thioredoxin domain maps to 1-105; the sequence is MFELDKDTFE…NVEAMVKKYI (105 aa). A disulfide bridge connects residues Cys-29 and Cys-32.

The protein belongs to the thioredoxin family.

Functionally, participates in various redox reactions through the reversible oxidation of its active center dithiol to a disulfide and catalyzes dithiol-disulfide exchange reactions. The protein is Thioredoxin (trxA) of Acetoanaerobium sticklandii (strain ATCC 12662 / DSM 519 / JCM 1433 / CCUG 9281 / NCIMB 10654 / HF) (Clostridium sticklandii).